Consider the following 309-residue polypeptide: MSHTETQTQQSHFGVDFLMGGVSAAIAKTGAAPIERVKLLMQNQEEMLKQGSLDTRYKGILDCFKRTATHEGIVSFWRGNTANVLRYFPTQALNFAFKDKIKSLLSYDRERDGYAKWFAGNLFSGGAAGGLSLLFVYSLDYARTRLAADARGSKSTSQRQFNGLLDVYKKTLKTDGLLGLYRGFVPSVLGIIVYRGLYFGLYDSFKPVLLTGALEGSFVASFLLGWVITMGASTASYPLDTVRRRMMMTSGQTIKYDGALDCLRKIVQKEGAYSLFKGCGANIFRGVAAAGVISLYDQLQLIMFGKKFK.

Solcar repeat units lie at residues serine 11–leucine 104, lysine 116–valine 208, and glycine 216–isoleucine 302. Helical transmembrane passes span phenylalanine 13–leucine 40, threonine 81–leucine 105, tyrosine 114–leucine 134, phenylalanine 184–phenylalanine 205, and valine 219–leucine 239. Residues arginine 86 and lysine 98 each coordinate ADP. Arginine 243 lines the ADP pocket. The important for transport activity stretch occupies residues arginine 243–methionine 248. A Nucleotide carrier signature motif motif is present at residues arginine 243–methionine 248. A helical membrane pass occupies residues cysteine 279 to leucine 299.

The protein belongs to the mitochondrial carrier (TC 2.A.29) family. Monomer.

The protein localises to the mitochondrion inner membrane. It catalyses the reaction ADP(in) + ATP(out) = ADP(out) + ATP(in). Its activity is regulated as follows. The matrix-open state (m-state) is inhibited by the membrane-permeable bongkrekic acid (BKA). The cytoplasmic-open state (c-state) is inhibited by the membrane-impermeable toxic inhibitor carboxyatractyloside (CATR). Its function is as follows. ADP:ATP antiporter that mediates import of ADP into the mitochondrial matrix for ATP synthesis, and export of ATP out to fuel the cell. Cycles between the cytoplasmic-open state (c-state) and the matrix-open state (m-state): operates by the alternating access mechanism with a single substrate-binding site intermittently exposed to either the cytosolic (c-state) or matrix (m-state) side of the inner mitochondrial membrane. The chain is ADP,ATP carrier protein 1 (AAC1) from Saccharomyces cerevisiae (strain ATCC 204508 / S288c) (Baker's yeast).